The primary structure comprises 181 residues: Large ribosomal subunit protein uL5 (181 aa).

This sequence belongs to the universal ribosomal protein uL5 family. In terms of assembly, part of the 50S ribosomal subunit; contacts the 5S rRNA and probably tRNA. Forms a bridge to the 30S subunit in the 70S ribosome.

Functionally, this is one of the proteins that bind and probably mediate the attachment of the 5S RNA into the large ribosomal subunit, where it forms part of the central protuberance. In the 70S ribosome it contacts protein S13 of the 30S subunit (bridge B1b), connecting the 2 subunits; this bridge is implicated in subunit movement. May contact the P site tRNA; the 5S rRNA and some of its associated proteins might help stabilize positioning of ribosome-bound tRNAs. The polypeptide is Large ribosomal subunit protein uL5 (Methanococcus maripaludis (strain C6 / ATCC BAA-1332)).